Consider the following 318-residue polypeptide: UAP56-interacting factor (318 aa).

N-acetylmethionine is present on methionine 1. The disordered stretch occupies residues 1 to 27 (MNRFSTRLMGATATPPPAPPKARSNEN). A Phosphothreonine modification is found at threonine 14. Residue serine 24 is modified to Phosphoserine. Residues 27-45 (NLDKIDMSLDDIIKLNRKE) carry the UAP56-binding motif motif. 2 positions are modified to phosphoserine: serine 61 and serine 118. A Glycyl lysine isopeptide (Lys-Gly) (interchain with G-Cter in SUMO1) cross-link involves residue lysine 140. A compositionally biased stretch (polar residues) spans 163–180 (LNRKNNIPNNFTRSGNKL). The disordered stretch occupies residues 163-183 (LNRKNNIPNNFTRSGNKLSHQ). A Glycyl lysine isopeptide (Lys-Gly) (interchain with G-Cter in SUMO2) cross-link involves residue lysine 261.

Belongs to the UIF family. As to quaternary structure, interacts with DDX39B/UAP56 and NXF1; interaction with DDX39B/UAP56 and NXF1 are mutually exclusive. Interacts with SSRP1; required for its recruitment to mRNAs. Interacts with CHTOP.

It localises to the nucleus. Its subcellular location is the nucleoplasm. It is found in the nucleus speckle. In terms of biological role, required for mRNA export from the nucleus to the cytoplasm. Acts as an adapter that uses the DDX39B/UAP56-NFX1 pathway to ensure efficient mRNA export and delivering to the nuclear pore. Associates with spliced and unspliced mRNAs simultaneously with ALYREF/THOC4. The chain is UAP56-interacting factor (FYTTD1) from Bos taurus (Bovine).